Here is a 198-residue protein sequence, read N- to C-terminus: Cyclin-dependent kinase inhibitor 1B (198 aa).

Positions 1-11 (MSNVRVSNGSP) are enriched in polar residues. Positions 1-34 (MSNVRVSNGSPSLERMDARQAEHPKPSACRNLFG) are disordered. S10 is modified (phosphoserine; by UHMK1). Basic and acidic residues predominate over residues 14–25 (ERMDARQAEHPK). The tract at residues 51–91 (DMEEASQRKWNFDFQNHNPLEGRYQWQEVDKGSLPEFYYRP) is interaction with CDK2. Y74 is modified (phosphotyrosine; by SRC). The segment at 85-198 (PEFYYRPPRP…KKPGLRRHQT (114 aa)) is disordered. Y88 is subject to Phosphotyrosine; by ABL, LYN and SRC. Y89 carries the post-translational modification Phosphotyrosine. Positions 104–124 (QESQDVSGSRQAVPSIGSQAY) are enriched in polar residues. Residues 153 to 169 (KRPAADDSSSQNKRANR) carry the Nuclear localization signal motif. T170 carries the phosphothreonine modification. The segment covering 175-186 (SDGSLNAGSVEQ) has biased composition (polar residues). T187 is modified (phosphothreonine; by PKB/AKT1, CDK1 and CDK2). T198 is subject to Phosphothreonine; by CaMK1, PKB/AKT1, RPS6KA1, RPS6KA3 and PIM1.

Belongs to the CDI family. Forms a ternary complex composed of CCNE1, CDK2 and CDKN1B. Interacts directly with CCNE1; the interaction is inhibited by CDK2-dependent phosphorylation on Thr-187. Interacts with COPS5, subunit of the COP9 signalosome complex; the interaction leads to CDKN1B degradation. Interacts with NUP50; the interaction leads to nuclear import and degradation of phosphorylated CDKN1B. Interacts with CCND1 and SNX6. Interacts (Thr-198-phosphorylated form) with 14-3-3 proteins, binds strongly YWHAQ, weakly YWHAE and YWHAH, but not YWHAB nor YWHAZ; the interaction with YWHAQ results in translocation to the cytoplasm. Interacts with AKT1 and LYN; the interactions lead to cytoplasmic mislocation, phosphorylation of CDKN1B and inhibition of cell cycle arrest. Forms a ternary complex with CCNA2 and CDK2; CDKN1B inhibits the kinase activity of CDK2 through conformational rearrangements. Interacts (unphosphorylated form) with CDK2. Forms a complex with CDK2 and SPDYA, but does not directly interact with SPDYA. Forms a ternary complex composed of cyclin D, CDK4 and CDKN1B. Interacts (phosphorylated on Tyr-88 and Tyr-89) with CDK4; the interaction is required for cyclin D and CDK4 complex assembly, induces nuclear translocation and activates the CDK4 kinase activity. Interacts with GRB2. Interacts with PIM1. Identified in a complex with SKP1, SKP2 and CKS1B. Interacts with UHMK1; the interaction leads to cytoplasmic mislocation, phosphorylation of CDKN1B and inhibition of cell cycle arrest. Also interacts with CDK1. Dephosphorylated on Thr-187 by PPM1H, leading to CDKN1B stability. Phosphorylated; phosphorylation occurs on serine, threonine and tyrosine residues. Phosphorylation on Ser-10 is the major site of phosphorylation in resting cells, takes place at the G(0)-G(1) phase and leads to protein stability. Phosphorylation on other sites is greatly enhanced by mitogens, growth factors, cMYC and in certain cancer cell lines. The phosphorylated form found in the cytoplasm is inactivate. Phosphorylation on Thr-198 is required for interaction with 14-3-3 proteins. Phosphorylation on Thr-187, by CDK1 and CDK2 leads to protein ubiquitination and proteasomal degradation. Tyrosine phosphorylation promotes this process. Phosphorylation by PKB/AKT1 can be suppressed by LY294002, an inhibitor of the catalytic subunit of PI3K. Phosphorylation on Tyr-88 and Tyr-89 has no effect on binding CDK2, but is required for binding CDK4. Dephosphorylated on tyrosine residues by G-CSF. Dephosphorylated on Thr-187 by PPM1H, leading to CDKN1B stability. In terms of processing, ubiquitinated; in the cytoplasm by the KPC complex (composed of RNF123/KPC1 and UBAC1/KPC2) and, in the nucleus, by SCF(SKP2). The latter requires prior phosphorylation on Thr-187. Ubiquitinated; by a TRIM21-containing SCF(SKP2)-like complex; leads to its degradation. Post-translationally, subject to degradation in the lysosome. Interaction with SNX6 promotes lysosomal degradation.

It is found in the nucleus. The protein resides in the cytoplasm. Its subcellular location is the endosome. In terms of biological role, important regulator of cell cycle progression. Inhibits the kinase activity of CDK2 bound to cyclin A, but has little inhibitory activity on CDK2 bound to SPDYA. Involved in G1 arrest. Potent inhibitor of cyclin E- and cyclin A-CDK2 complexes. Forms a complex with cyclin type D-CDK4 complexes and is involved in the assembly, stability, and modulation of CCND1-CDK4 complex activation. Acts either as an inhibitor or an activator of cyclin type D-CDK4 complexes depending on its phosphorylation state and/or stoichometry. The polypeptide is Cyclin-dependent kinase inhibitor 1B (CDKN1B) (Cricetulus griseus (Chinese hamster)).